Consider the following 464-residue polypeptide: NADH dehydrogenase [ubiquinone] flavoprotein 1, mitochondrial (464 aa).

The transit peptide at 1 to 20 (MLAARHFLGGLVPVRVSVRF) directs the protein to the mitochondrion. N6-acetyllysine; alternate is present on Lys81. Lys81 carries the post-translational modification N6-succinyllysine; alternate. 87–96 (GRGGAGFPTG) lines the NADH pocket. An N6-acetyllysine modification is found at Lys104. 199-247 (RGAGAYICGEETALIESIEGKQGKPRLKPPFPADVGVFGCPTTVANVET) is an FMN binding site. Arg257 carries the post-translational modification Omega-N-methylarginine. The residue at position 375 (Lys375) is an N6-acetyllysine. Residues Cys379, Cys382, Cys385, and Cys425 each contribute to the [4Fe-4S] cluster site.

The protein belongs to the complex I 51 kDa subunit family. Core subunit of respiratory chain NADH dehydrogenase (Complex I) which is composed of 45 different subunits. This is a component of the flavoprotein-sulfur (FP) fragment of the enzyme. Interacts with RAB5IF. FMN is required as a cofactor. The cofactor is [4Fe-4S] cluster.

Its subcellular location is the mitochondrion inner membrane. The enzyme catalyses a ubiquinone + NADH + 5 H(+)(in) = a ubiquinol + NAD(+) + 4 H(+)(out). Core subunit of the mitochondrial membrane respiratory chain NADH dehydrogenase (Complex I) which catalyzes electron transfer from NADH through the respiratory chain, using ubiquinone as an electron acceptor. Part of the peripheral arm of the enzyme, where the electrons from NADH are accepted by flavin mononucleotide (FMN) and then passed along a chain of iron-sulfur clusters by electron tunnelling to the final acceptor ubiquinone. Contains FMN, which is the initial electron acceptor as well as one iron-sulfur cluster. The chain is NADH dehydrogenase [ubiquinone] flavoprotein 1, mitochondrial from Mus musculus (Mouse).